Here is a 77-residue protein sequence, read N- to C-terminus: Secapin (77 aa).

An N-terminal signal peptide occupies residues 1-32 (MKNYSKNATHLITVLLFSFVVILLIIPSKCEA). A propeptide spanning residues 33-52 (VSNDMQPLEARSADLIPEPR) is cleaved from the precursor. Cys61 and Cys72 are joined by a disulfide.

The protein belongs to the secapin family. Expressed by the venom gland.

It is found in the secreted. Its function is as follows. Nontoxic peptide. The protein is Secapin of Vespa velutina nigrithorax (Hornet).